We begin with the raw amino-acid sequence, 310 residues long: MPLNLQKNLPAIELLKKEHIFVMDSLRASEQDIRPLRVVVLNLMPLKITTETDLVRLLSNTPLQVELDFMKIKGHTPKNTPIEHMQEFYKDFDEMADDFYDGMIVTGAPVEQMPFEEVSYWEEITQIFDWARTHVTSTLYICWAAQAGLYHFYGVPKYDLPAKMFGVFRHSLREPFVPIFRGFDDEFFVPHSRHTEIRREDIMKVPELTLLSESEESGVYMAMARGGREFFITGHSEYSPYTLNDEYMRDLGKGLPINKPRNYYRNNDPAQGPVVRWRGHANLLFTNWLNYYVYQETPFRREDIKKLGSL.

The active-site Acyl-thioester intermediate is the Cys142. Residues Lys163 and Ser192 each contribute to the substrate site. His235 functions as the Proton acceptor in the catalytic mechanism. The active site involves Glu237. Arg249 provides a ligand contact to substrate.

This sequence belongs to the MetA family.

It localises to the cytoplasm. It carries out the reaction L-homoserine + acetyl-CoA = O-acetyl-L-homoserine + CoA. Its pathway is amino-acid biosynthesis; L-methionine biosynthesis via de novo pathway; O-acetyl-L-homoserine from L-homoserine: step 1/1. Its function is as follows. Transfers an acetyl group from acetyl-CoA to L-homoserine, forming acetyl-L-homoserine. This Parabacteroides distasonis (strain ATCC 8503 / DSM 20701 / CIP 104284 / JCM 5825 / NCTC 11152) protein is Homoserine O-acetyltransferase.